A 433-amino-acid polypeptide reads, in one-letter code: Legumain (433 aa).

A signal peptide spans 1–17 (MVWKVAVFLSAALVIGA). Residue Asn-91 is glycosylated (N-linked (GlcNAc...) asparagine). His-148 is an active-site residue. Asn-167 carries an N-linked (GlcNAc...) asparagine glycan. Cys-189 functions as the Nucleophile in the catalytic mechanism. N-linked (GlcNAc...) asparagine glycosylation is found at Asn-263 and Asn-272. A propeptide spanning residues 324–433 (DLEESRQLTE…SMDHVCLGHY (110 aa)) is cleaved from the precursor. Disulfide bonds link Cys-378/Cys-412 and Cys-390/Cys-429.

Belongs to the peptidase C13 family. As to quaternary structure, homodimer before autocatalytic removal of the propeptide. Monomer after autocatalytic processing. May interact with integrins. In terms of processing, activated by autocatalytic processing at pH 4.

The protein resides in the lysosome. It carries out the reaction Hydrolysis of proteins and small molecule substrates at -Asn-|-Xaa- bonds.. Its function is as follows. Has a strict specificity for hydrolysis of asparaginyl bonds. Can also cleave aspartyl bonds slowly, especially under acidic conditions. Involved in the processing of proteins for MHC class II antigen presentation in the lysosomal/endosomal system. Also involved in MHC class I antigen presentation in cross-presenting dendritic cells by mediating cleavage and maturation of Perforin-2 (MPEG1), thereby promoting antigen translocation in the cytosol. Required for normal lysosomal protein degradation in renal proximal tubules. Required for normal degradation of internalized EGFR. Plays a role in the regulation of cell proliferation via its role in EGFR degradation. In Pongo abelii (Sumatran orangutan), this protein is Legumain (LGMN).